Consider the following 586-residue polypeptide: MKYILVTGGVISGIGKGIIASSIGTILKSCGLRVTAIKIDPYINIDAGTFSPYEHGEVFVLNDGGEVDLDLGNYERFLDINLYKDNNITTGKIYQHVINKERRGDYLGKTVQVVPHITDAIQDWVMNQAKVSVDGNKEDPQICVIELGGTIGDIEGMAFVEAFRQFQFKAKRENFYNIHVSLVPQPSATGEQKTKPTQNSVRALRGLGLSPDLIVCRSSTPIEMAVKEKISMFCHVNPEQVICIHDVSSIYRVPLLLEEQGVVKYFQERLDLPINDCSNNLLFKWKTMADRYERLQKICSIALVGKYTKLRDCYASVFKALEHSALAINHKLNLMYIDSIDLEPVTKAEDPVKFHEAWQKLCLADGILVPGGFGIRGTLGKLQAISWARTKKIPFLGICLGMQLAVIEFARNCLNLKDANSTEFDPNTPVPLVIDMPEHNPGDLGGTMRLGLRRTVFTTENSILKKLYGDVPYIEERHRHRYEVNPNLINQFENKDLCFVGEDVDGKRMEIIELTGHPYFIGVQFHPEFSSRPMKPSPPYLGLLLAATGTLNTHLQQMSKLSYSDIYSDASDDSFSEAKFAELDIN.

Residues 300–554 (SIALVGKYTK…LAATGTLNTH (255 aa)) enclose the Glutamine amidotransferase type-1 domain. Active-site for GATase activity residues include Cys-399, His-526, and Glu-528. Phosphoserine is present on residues Ser-568, Ser-571, and Ser-574.

This sequence belongs to the CTP synthase family.

The enzyme catalyses UTP + L-glutamine + ATP + H2O = CTP + L-glutamate + ADP + phosphate + 2 H(+). Its pathway is pyrimidine metabolism; CTP biosynthesis via de novo pathway; CTP from UDP: step 2/2. Catalyzes the ATP-dependent amination of UTP to CTP with either L-glutamine or ammonia as the source of nitrogen. Constitutes the rate-limiting enzyme in the synthesis of cytosine nucleotides. This is CTP synthase 2 (Ctps2) from Rattus norvegicus (Rat).